A 362-amino-acid chain; its full sequence is MLKEAYISRLDKLQEKYRKLQEELSKPEVIQDVEKYKKLSKELKELQEINELYERYKKAQKELKEAKELLKSSDKDLRELAEEEVNRLTEEMKKLEEELKVHLVPKDPNDTKNVILEIRAGAGGEEAALFAADLFRMYQKYAEEKGWKVSILSSNKTGLGGYKEVIALIEGEGAYSRLKYESGVHRVQRVPVTESSGRIHTSTATVAVLPEVDETDIKIKPEELKIETFRASGAGGQYVNTTETAVRITHIPTGIVVQCQDERSQFQNKQKALKILYAKLKDYYERKKQEEIAKERKEQVGTGERSEKIRTYNFPQNRVTDHRINLTLYKLQDVLEGKLDEIIDALRAKEIEKKLELVEKEG.

Position 237 is an N5-methylglutamine (glutamine 237).

It belongs to the prokaryotic/mitochondrial release factor family. Methylated by PrmC. Methylation increases the termination efficiency of RF1.

The protein resides in the cytoplasm. Peptide chain release factor 1 directs the termination of translation in response to the peptide chain termination codons UAG and UAA. This chain is Peptide chain release factor 1 (prfA), found in Aquifex aeolicus (strain VF5).